The sequence spans 508 residues: Maturase K (508 aa).

The protein belongs to the intron maturase 2 family. MatK subfamily.

Its subcellular location is the plastid. It is found in the chloroplast. Functionally, usually encoded in the trnK tRNA gene intron. Probably assists in splicing its own and other chloroplast group II introns. The protein is Maturase K of Huidobria chilensis (Loasa chilensis).